A 453-amino-acid chain; its full sequence is uncharacterized protein (453 aa).

A YrdC-like domain is found at 276-437 (IAQTKQIKAL…TKQIVRGSST (162 aa)).

This is an uncharacterized protein from Mycoplasma pneumoniae (strain ATCC 29342 / M129 / Subtype 1) (Mycoplasmoides pneumoniae).